Reading from the N-terminus, the 360-residue chain is POU domain, class 5, transcription factor 1 (360 aa).

Disordered stretches follow at residues 1 to 51 (MAGH…GPGV) and 88 to 114 (GGLETSQPEGEAGVGVESNSDGASPEP). Residues 4–12 (HLTSDFAFS) carry the 9aaTAD motif. Ser-111 bears the Phosphoserine; by MAPK mark. Lys-123 is covalently cross-linked (Glycyl lysine isopeptide (Lys-Gly) (interchain with G-Cter in SUMO)). The POU-specific domain occupies 138–212 (DIKALQKELE…LLQKWVEEAD (75 aa)). DNA-binding residues include Arg-157 and Gln-164. DNA-binding stretches follow at residues 180–186 (SQTTICR) and 193–196 (SFKN). Positions 230–289 (RKRKRTSIENRVRGNLENLFLQCPKPTLQQISHIAQQLGLEKDVVRVWFCNRRQKGKRSS) form a DNA-binding region, homeobox. The residue at position 235 (Thr-235) is a Phosphothreonine. Phosphoserine occurs at positions 236, 289, 290, and 355.

The protein belongs to the POU transcription factor family. Class-5 subfamily. Interacts with PKM. Interacts with WWP2. Interacts with UBE2I and ZSCAN10. Interacts with PCGF1. Interacts with ESRRB; recruits ESRRB near the POU5F1-SOX2 element in the NANOG proximal promoter; the interaction is DNA independent. Interacts with ZNF322. Interacts with MAPK8 and MAPK9; the interaction allows MAPK8 and MAPK9 to phosphorylate POU5F1 on Ser-355. Interacts (when phosphorylated on Ser-355) with FBXW8. Interacts with FBXW4. Interacts with SOX2 and SOX15; binds synergistically with either SOX2 or SOX15 to DNA. Interacts with DDX56. Sumoylation enhances the protein stability, DNA binding and transactivation activity. Sumoylation is required for enhanced YES1 expression. Post-translationally, ubiquitinated; undergoes 'Lys-63'-linked polyubiquitination by WWP2 leading to proteasomal degradation. In terms of processing, ERK1/2-mediated phosphorylation at Ser-111 promotes nuclear exclusion and proteasomal degradation. Phosphorylation at Thr-235 and Ser-236 decrease DNA-binding and alters ability to activate transcription.

It is found in the cytoplasm. Its subcellular location is the nucleus. In terms of biological role, transcription factor that binds to the octamer motif (5'-ATTTGCAT-3'). Forms a trimeric complex with SOX2 or SOX15 on DNA and controls the expression of a number of genes involved in embryonic development such as YES1, FGF4, UTF1 and ZFP206. Critical for early embryogenesis and for embryonic stem cell pluripotency. The sequence is that of POU domain, class 5, transcription factor 1 (POU5F1) from Pan troglodytes (Chimpanzee).